The following is a 456-amino-acid chain: Alcohol acyltransferase 1 (456 aa).

Active-site proton acceptor residues include His-166 and Asp-382.

Belongs to the plant acyltransferase family.

Involved in the biosynthesis of volatile esters which confer kiwifruit flavor. Alcohol acyl transferase that can use a wide range of alcohols as substrate to produce esters. The protein is Alcohol acyltransferase 1 of Actinidia chinensis var. chinensis (Chinese soft-hair kiwi).